We begin with the raw amino-acid sequence, 352 residues long: Chorismate synthase (352 aa).

Residue Arg48 coordinates NADP(+). FMN is bound by residues 125–127 (RSS), 237–238 (NA), Gly278, 293–297 (KPTSS), and Arg319.

This sequence belongs to the chorismate synthase family. As to quaternary structure, homotetramer. FMNH2 is required as a cofactor.

It catalyses the reaction 5-O-(1-carboxyvinyl)-3-phosphoshikimate = chorismate + phosphate. It participates in metabolic intermediate biosynthesis; chorismate biosynthesis; chorismate from D-erythrose 4-phosphate and phosphoenolpyruvate: step 7/7. In terms of biological role, catalyzes the anti-1,4-elimination of the C-3 phosphate and the C-6 proR hydrogen from 5-enolpyruvylshikimate-3-phosphate (EPSP) to yield chorismate, which is the branch point compound that serves as the starting substrate for the three terminal pathways of aromatic amino acid biosynthesis. This reaction introduces a second double bond into the aromatic ring system. This is Chorismate synthase from Francisella tularensis subsp. tularensis (strain FSC 198).